The sequence spans 325 residues: Protease HtpX homolog (325 aa).

The chain crosses the membrane as a helical span at residues 20-40 (IGYLLGGGGGMMIALVIAVAM). Residue H130 participates in Zn(2+) binding. E131 is an active-site residue. Residue H134 participates in Zn(2+) binding. Helical transmembrane passes span 145–165 (IVAT…FLGG) and 173–193 (VMGV…AMIV). E202 serves as a coordination point for Zn(2+). The segment at 288–325 (AMTARAAAPSQNSGPWGQRSDNAGGNSNGGSRYRGPWS) is disordered. A compositionally biased stretch (low complexity) spans 306–325 (RSDNAGGNSNGGSRYRGPWS).

The protein belongs to the peptidase M48B family. It depends on Zn(2+) as a cofactor.

The protein resides in the cell inner membrane. The chain is Protease HtpX homolog from Brucella abortus (strain S19).